A 207-amino-acid chain; its full sequence is Small ribosomal subunit protein uS4A (207 aa).

Positions 98–163 constitute an S4 RNA-binding domain; sequence TRLDNLVYRL…SPKFKELKEN (66 aa).

It belongs to the universal ribosomal protein uS4 family. As to quaternary structure, part of the 30S ribosomal subunit. Contacts protein S5. The interaction surface between S4 and S5 is involved in control of translational fidelity.

In terms of biological role, one of the primary rRNA binding proteins, it binds directly to 16S rRNA where it nucleates assembly of the body of the 30S subunit. Functionally, with S5 and S12 plays an important role in translational accuracy. This chain is Small ribosomal subunit protein uS4A, found in Alkaliphilus metalliredigens (strain QYMF).